The sequence spans 848 residues: Protein NETWORKED 2C (848 aa).

One can recognise an NAB domain in the interval 10-90 (YSWWWASHVR…ERYDHISKEL (81 aa)). The tract at residues 108 to 141 (FAMNEDDDDDAPVSPRHHKNKTSNKNVPKVPDLP) is disordered. Coiled-coil stretches lie at residues 172-204 (LSKT…SYEN), 241-278 (EAQI…SRKQ), 305-454 (SEKE…KATN), and 752-797 (AKFE…SEEF).

Belongs to the NET family.

Plant-specific actin binding protein. May be part of a membrane-cytoskeletal adapter complex. This is Protein NETWORKED 2C from Arabidopsis thaliana (Mouse-ear cress).